The sequence spans 111 residues: Ig kappa chain V-III region PC 6684 (111 aa).

Residues 1–23 (DIVLTQSPASLAVSLGQRATISC) are framework-1. Residues cysteine 23 and cysteine 92 are joined by a disulfide bond. The interval 24-38 (RASKSVSTSGYSYMH) is complementarity-determining-1. Residues 39 to 53 (WYQQKPGQPPKLLIY) are framework-2. A complementarity-determining-2 region spans residues 54–60 (LASNLES). A framework-3 region spans residues 61–92 (GVPARFSGSGSGTDFTLNIHPVEEEDAATYYC). Positions 93 to 101 (QHSRELPRT) are complementarity-determining-3. Residues 102–111 (FGGGTKLEIK) are framework-4.

The protein is Ig kappa chain V-III region PC 6684 of Mus musculus (Mouse).